We begin with the raw amino-acid sequence, 247 residues long: Uridylate kinase (247 aa).

21–24 (KVSG) is a binding site for ATP. A UMP-binding site is contributed by Gly-63. Positions 64 and 68 each coordinate ATP. Residues Asp-83 and 144–151 (TGNPFCTT) contribute to the UMP site. Thr-171, Gln-172, Tyr-177, and Asp-180 together coordinate ATP.

Belongs to the UMP kinase family. In terms of assembly, homohexamer.

It is found in the cytoplasm. The catalysed reaction is UMP + ATP = UDP + ADP. It functions in the pathway pyrimidine metabolism; CTP biosynthesis via de novo pathway; UDP from UMP (UMPK route): step 1/1. With respect to regulation, inhibited by UTP. Its function is as follows. Catalyzes the reversible phosphorylation of UMP to UDP. This chain is Uridylate kinase, found in Rickettsia rickettsii (strain Sheila Smith).